A 265-amino-acid chain; its full sequence is Interleukin-2 receptor subunit alpha (265 aa).

Residues 1–21 (MDSYLLMWGLLTLIMVPGCFA) form the signal peptide. Residues 22-84 (ELCDDDPPEI…SWDNQCQCTS (63 aa)) form the Sushi 1 domain. The Extracellular segment spans residues 22–240 (ELCDDDPPEI…ETFIFTTEYQ (219 aa)). 3 disulfide bridges follow: Cys-24-Cys-67, Cys-49-Cys-80, and Cys-51-Cys-82. N-linked (GlcNAc...) asparagine glycosylation is found at Asn-70 and Asn-89. Over residues 87 to 98 (TRNTTKQVTPQP) the composition is skewed to polar residues. Residues 87 to 123 (TRNTTKQVTPQPEEQKERKTTEMQSPMQPVDQASLPG) form a disordered region. Positions 123 to 186 (GHCREPPPWE…WTQPQLICTG (64 aa)) constitute a Sushi 2 domain. 2 disulfides stabilise this stretch: Cys-125–Cys-168 and Cys-152–Cys-184. The segment at 190-210 (TSQFPGEEKPQASPEGRPESE) is disordered. The segment covering 195 to 209 (GEEKPQASPEGRPES) has biased composition (basic and acidic residues). Residues 241–259 (VAVAGCVFLLISVLLLSGL) traverse the membrane as a helical segment. Residues 260 to 265 (TWQRRQ) are Cytoplasmic-facing.

Non-covalent dimer of an alpha and a beta subunit. IL2R exists in 3 different forms: a high affinity dimer, an intermediate affinity monomer (beta subunit), and a low affinity monomer (alpha subunit). The high and intermediate affinity forms also associate with a gamma subunit.

It is found in the membrane. Its function is as follows. Receptor for interleukin-2. The receptor is involved in the regulation of immune tolerance by controlling regulatory T cells (TREGs) activity. TREGs suppress the activation and expansion of autoreactive T-cells. This chain is Interleukin-2 receptor subunit alpha (IL2RA), found in Pan troglodytes (Chimpanzee).